The primary structure comprises 297 residues: Alpha-tubulin N-acetyltransferase 1 (297 aa).

The 186-residue stretch at 1–186 folds into the N-acetyltransferase domain; sequence MEFDFDVHKI…NNFVVFDGFF (186 aa). Acetyl-CoA-binding positions include 120–133 and 156–165; these read FYIH…GFGK and SEKFLSFLRK. The interval 269–297 is disordered; sequence LHRTANSEQEDHSQRRRTSSLNRPQSIHH. Positions 287 to 297 are enriched in polar residues; that stretch reads SSLNRPQSIHH.

This sequence belongs to the acetyltransferase ATAT1 family.

Its subcellular location is the cytoplasm. The protein resides in the membrane. The protein localises to the clathrin-coated pit. It localises to the cell junction. It is found in the focal adhesion. Its subcellular location is the cell projection. The protein resides in the axon. The protein localises to the cytoskeleton. It localises to the spindle. The catalysed reaction is L-lysyl-[alpha-tubulin] + acetyl-CoA = N(6)-acetyl-L-lysyl-[alpha-tubulin] + CoA + H(+). Functionally, specifically acetylates 'Lys-40' in alpha-tubulin on the lumenal side of microtubules. Promotes microtubule destabilization and accelerates microtubule dynamics; this activity may be independent of acetylation activity. Acetylates alpha-tubulin with a slow enzymatic rate, due to a catalytic site that is not optimized for acetyl transfer. Enters the microtubule through each end and diffuses quickly throughout the lumen of microtubules. Acetylates only long/old microtubules because of its slow acetylation rate since it does not have time to act on dynamically unstable microtubules before the enzyme is released. May be involved in neuron development. This chain is Alpha-tubulin N-acetyltransferase 1, found in Xenopus tropicalis (Western clawed frog).